The sequence spans 186 residues: Methyl-CpG-binding domain-containing protein 4 (186 aa).

The CW-type zinc finger occupies 22 to 77; the sequence is GRLIDTYAAQCDNCHKWRVIDSQEEYEDIRSKMLEDPFNCQKKQGMSCEEPADIDY. Residues 31–69 carry the MBD-associated domain (MAD) motif; the sequence is QCDNCHKWRVIDSQEEYEDIRSKMLEDPFNCQKKQGMSC. Zn(2+) is bound by residues Cys-32, Cys-35, Cys-61, and Cys-69. Positions 83-153 constitute an MBD domain; it reads WVIDKPGLPK…GDFNFTVPKV (71 aa). The disordered stretch occupies residues 154-186; sequence MEDTVPPDPKLGSPFPSTTTTTSEKSSVKQSHN. The segment covering 166–178 has biased composition (low complexity); that stretch reads SPFPSTTTTTSEK.

Expressed in rosette leaves, buds, flowers, stems, mature seeds and roots.

The protein resides in the nucleus. Its function is as follows. Transcriptional regulator that binds CpG, CpNpN and CpNpG (N is A, T, or C) islands in promoters regardless the DNA methylation status. Plays probably a role in gene silencing. This Arabidopsis thaliana (Mouse-ear cress) protein is Methyl-CpG-binding domain-containing protein 4 (MBD4).